The sequence spans 643 residues: Threonine--tRNA ligase (643 aa).

Residues methionine 1–lysine 61 form the TGS domain. The tract at residues aspartate 246 to proline 539 is catalytic. Zn(2+) contacts are provided by cysteine 339, histidine 390, and histidine 516.

Belongs to the class-II aminoacyl-tRNA synthetase family. Homodimer. The cofactor is Zn(2+).

It is found in the cytoplasm. It carries out the reaction tRNA(Thr) + L-threonine + ATP = L-threonyl-tRNA(Thr) + AMP + diphosphate + H(+). Its function is as follows. Catalyzes the attachment of threonine to tRNA(Thr) in a two-step reaction: L-threonine is first activated by ATP to form Thr-AMP and then transferred to the acceptor end of tRNA(Thr). Also edits incorrectly charged L-seryl-tRNA(Thr). In Sulfurihydrogenibium sp. (strain YO3AOP1), this protein is Threonine--tRNA ligase.